A 599-amino-acid polypeptide reads, in one-letter code: Elongation factor 4 (599 aa).

The tr-type G domain occupies 2-184; the sequence is KHIRNFSIIA…RLVRDIPPPE (183 aa). GTP is bound by residues 14 to 19 and 131 to 134; these read DHGKST and NKID.

Belongs to the TRAFAC class translation factor GTPase superfamily. Classic translation factor GTPase family. LepA subfamily.

It is found in the cell inner membrane. The enzyme catalyses GTP + H2O = GDP + phosphate + H(+). Its function is as follows. Required for accurate and efficient protein synthesis under certain stress conditions. May act as a fidelity factor of the translation reaction, by catalyzing a one-codon backward translocation of tRNAs on improperly translocated ribosomes. Back-translocation proceeds from a post-translocation (POST) complex to a pre-translocation (PRE) complex, thus giving elongation factor G a second chance to translocate the tRNAs correctly. Binds to ribosomes in a GTP-dependent manner. The sequence is that of Elongation factor 4 from Pectobacterium carotovorum subsp. carotovorum (strain PC1).